The chain runs to 705 residues: Phycobiliprotein ApcE (705 aa).

Positions 18 to 76 (QTVPGSTIVQAEQQDRFPQQGELRELSSYFQSGLKRLAIAEIITRNSDTIVSRAANRIF) are phycobilin-like 1. The tract at residues 77 to 145 (VGGSPLAYIE…VRIPSGFRPI (69 aa)) is phycobilin-like loop. Residues 146 to 238 (NVARYGPRNM…YFDVLIREFE (93 aa)) are phycobilin-like 2. Position 196 (cysteine 196) interacts with (2R,3E)-phycocyanobilin. PBS-linker domains are found at residues 253-433 (DQQG…FVKV) and 514-691 (KIFK…SLRP). The tract at residues 685-705 (VKASLRPAAGAQERRPEVGRR) is disordered. Positions 696–705 (QERRPEVGRR) are enriched in basic and acidic residues.

Belongs to the phycobilisome linker protein family. As to quaternary structure, phycobilisomes of this organism are composed of a two cylinder core, from which six rods radiate. The core is mainly composed of allophycocyanin alpha and beta chains, and of three minor components: the allophycocyanin alpha-B chain, a 18.3 kDa polypeptide, and the anchor polypeptide L-CM. In terms of processing, contains one covalently linked bilin chromophore. This protein autochromophorylates.

The protein resides in the cellular thylakoid membrane. Functionally, this protein is postulated to act both as terminal energy acceptor (by its phycobilin-like domains) and as a linker polypeptide (by its repeats and arms) that stabilizes the phycobilisome core architecture. Has intrinsic bilin lyase activity. This chain is Phycobiliprotein ApcE (apcE), found in Synechococcus sp. (strain ATCC 27144 / PCC 6301 / SAUG 1402/1) (Anacystis nidulans).